The chain runs to 343 residues: tRNA N6-adenosine threonylcarbamoyltransferase (343 aa).

The Fe cation site is built by His108 and His112. Residues 129-133, Asp161, Glu178, and Ser258 each bind substrate; that span reads LISGG. A Fe cation-binding site is contributed by Asp286.

This sequence belongs to the KAE1 / TsaD family. Fe(2+) is required as a cofactor.

The protein localises to the cytoplasm. The enzyme catalyses L-threonylcarbamoyladenylate + adenosine(37) in tRNA = N(6)-L-threonylcarbamoyladenosine(37) in tRNA + AMP + H(+). Functionally, required for the formation of a threonylcarbamoyl group on adenosine at position 37 (t(6)A37) in tRNAs that read codons beginning with adenine. Is probably involved in the transfer of the threonylcarbamoyl moiety of threonylcarbamoyl-AMP (TC-AMP) to the N6 group of A37. This Pyrobaculum aerophilum (strain ATCC 51768 / DSM 7523 / JCM 9630 / CIP 104966 / NBRC 100827 / IM2) protein is tRNA N6-adenosine threonylcarbamoyltransferase.